The following is a 171-amino-acid chain: Co-chaperone protein HscB homolog (171 aa).

The J domain maps to 3–75; sequence SHFALFDLEP…SQRARYLLSL (73 aa).

It belongs to the HscB family. As to quaternary structure, interacts with HscA and stimulates its ATPase activity.

Co-chaperone involved in the maturation of iron-sulfur cluster-containing proteins. Seems to help targeting proteins to be folded toward HscA. The sequence is that of Co-chaperone protein HscB homolog from Azotobacter vinelandii.